The chain runs to 212 residues: External core antigen (212 aa).

An N-terminal signal peptide occupies residues 1-19; sequence MQLFHLCLIISCSCPTVQA. The tract at residues 25–27 is HBEAG; it reads GWL. Positions 165-212 are disordered; the sequence is NAPILSTLPETTVVRRRGRSPRRRTPSPRRRRSQSPRRRRSQSRESQC. Residues 178–205 show a composition bias toward basic residues; the sequence is VRRRGRSPRRRTPSPRRRRSQSPRRRRS. The stretch at 184–190 is one 1; half-length repeat; that stretch reads SPRRRTP. A 3 X 8 AA repeats of S-P-R-R-R-R-S-Q region spans residues 184-206; that stretch reads SPRRRTPSPRRRRSQSPRRRRSQ. Residues 184-212 constitute a propeptide that is removed on maturation; sequence SPRRRTPSPRRRRSQSPRRRRSQSRESQC. 2 consecutive repeat copies span residues 191-198 and 199-206.

Belongs to the orthohepadnavirus precore antigen family. In terms of assembly, homodimerizes. In terms of processing, phosphorylated. Post-translationally, cleaved by host furin.

Its subcellular location is the secreted. It localises to the host nucleus. Its function is as follows. May regulate immune response to the intracellular capsid in acting as a T-cell tolerogen, by having an immunoregulatory effect which prevents destruction of infected cells by cytotoxic T-cells. This immune regulation may predispose to chronicity during perinatal infections and prevent severe liver injury during adult infections. In Homo sapiens (Human), this protein is External core antigen.